The sequence spans 343 residues: Anthranilate phosphoribosyltransferase (343 aa).

5-phospho-alpha-D-ribose 1-diphosphate is bound by residues Gly-86, 89-90, Thr-94, 96-99, 114-122, and Ser-126; these read GD, NIST, and KHGNRSASG. Gly-86 provides a ligand contact to anthranilate. Mg(2+) is bound at residue Ser-98. Asn-117 contributes to the anthranilate binding site. Arg-172 contributes to the anthranilate binding site. 2 residues coordinate Mg(2+): Asp-231 and Glu-232.

This sequence belongs to the anthranilate phosphoribosyltransferase family. In terms of assembly, homodimer. It depends on Mg(2+) as a cofactor.

It catalyses the reaction N-(5-phospho-beta-D-ribosyl)anthranilate + diphosphate = 5-phospho-alpha-D-ribose 1-diphosphate + anthranilate. The protein operates within amino-acid biosynthesis; L-tryptophan biosynthesis; L-tryptophan from chorismate: step 2/5. Catalyzes the transfer of the phosphoribosyl group of 5-phosphorylribose-1-pyrophosphate (PRPP) to anthranilate to yield N-(5'-phosphoribosyl)-anthranilate (PRA). This is Anthranilate phosphoribosyltransferase from Synechococcus sp. (strain JA-3-3Ab) (Cyanobacteria bacterium Yellowstone A-Prime).